The sequence spans 538 residues: Putative cysteine ligase BshC (538 aa).

The stretch at 462-533 (LDHLEKRLLK…DPLESNFKIL (72 aa)) forms a coiled coil.

Belongs to the BshC family.

This Christiangramia forsetii (strain DSM 17595 / CGMCC 1.15422 / KT0803) (Gramella forsetii) protein is Putative cysteine ligase BshC.